The primary structure comprises 98 residues: MSADPRHYDVIVAPVITEKATNLSELNKVVFRVAPKATKPQIKEAVEKLFEVKVKSVNTLVTKGKTKMFRGQRGQRSDVKKAIVTLEEGQTIDVTTGL.

Belongs to the universal ribosomal protein uL23 family. Part of the 50S ribosomal subunit. Contacts protein L29, and trigger factor when it is bound to the ribosome.

In terms of biological role, one of the early assembly proteins it binds 23S rRNA. One of the proteins that surrounds the polypeptide exit tunnel on the outside of the ribosome. Forms the main docking site for trigger factor binding to the ribosome. This Methylobacterium nodulans (strain LMG 21967 / CNCM I-2342 / ORS 2060) protein is Large ribosomal subunit protein uL23.